A 101-amino-acid chain; its full sequence is Small ribosomal subunit protein uS14 (101 aa).

Belongs to the universal ribosomal protein uS14 family. In terms of assembly, part of the 30S ribosomal subunit. Contacts proteins S3 and S10.

Its function is as follows. Binds 16S rRNA, required for the assembly of 30S particles and may also be responsible for determining the conformation of the 16S rRNA at the A site. The sequence is that of Small ribosomal subunit protein uS14 from Cupriavidus metallidurans (strain ATCC 43123 / DSM 2839 / NBRC 102507 / CH34) (Ralstonia metallidurans).